A 181-amino-acid chain; its full sequence is ATP-dependent protease subunit HslV (181 aa).

The active site involves Thr-11. Na(+)-binding residues include Ala-166, Cys-169, and Thr-172.

The protein belongs to the peptidase T1B family. HslV subfamily. As to quaternary structure, a double ring-shaped homohexamer of HslV is capped on each side by a ring-shaped HslU homohexamer. The assembly of the HslU/HslV complex is dependent on binding of ATP.

The protein resides in the cytoplasm. It carries out the reaction ATP-dependent cleavage of peptide bonds with broad specificity.. Allosterically activated by HslU binding. Functionally, protease subunit of a proteasome-like degradation complex believed to be a general protein degrading machinery. This Chlorobaculum tepidum (strain ATCC 49652 / DSM 12025 / NBRC 103806 / TLS) (Chlorobium tepidum) protein is ATP-dependent protease subunit HslV.